The chain runs to 177 residues: Peptide methionine sulfoxide reductase MsrA (177 aa).

Cys-15 is a catalytic residue.

It belongs to the MsrA Met sulfoxide reductase family.

It catalyses the reaction L-methionyl-[protein] + [thioredoxin]-disulfide + H2O = L-methionyl-(S)-S-oxide-[protein] + [thioredoxin]-dithiol. The catalysed reaction is [thioredoxin]-disulfide + L-methionine + H2O = L-methionine (S)-S-oxide + [thioredoxin]-dithiol. Functionally, has an important function as a repair enzyme for proteins that have been inactivated by oxidation. Catalyzes the reversible oxidation-reduction of methionine sulfoxide in proteins to methionine. This Listeria monocytogenes serotype 4b (strain CLIP80459) protein is Peptide methionine sulfoxide reductase MsrA.